Reading from the N-terminus, the 156-residue chain is Small ribosomal subunit protein uS7 (156 aa).

Belongs to the universal ribosomal protein uS7 family. In terms of assembly, part of the 30S ribosomal subunit. Contacts proteins S9 and S11.

One of the primary rRNA binding proteins, it binds directly to 16S rRNA where it nucleates assembly of the head domain of the 30S subunit. Is located at the subunit interface close to the decoding center, probably blocks exit of the E-site tRNA. The chain is Small ribosomal subunit protein uS7 from Wigglesworthia glossinidia brevipalpis.